We begin with the raw amino-acid sequence, 130 residues long: Small ribosomal subunit protein uS9 (130 aa).

The protein belongs to the universal ribosomal protein uS9 family.

The sequence is that of Small ribosomal subunit protein uS9 from Geobacillus thermodenitrificans (strain NG80-2).